Consider the following 488-residue polypeptide: Cysteine--tRNA ligase (488 aa).

Position 29 (Cys-29) interacts with Zn(2+). A 'HIGH' region motif is present at residues 31-41; the sequence is ATVQGMPHVGH. 3 residues coordinate Zn(2+): Cys-227, His-252, and Glu-256. A 'KMSKS' region motif is present at residues 283-287; the sequence is KMSKS. Lys-286 lines the ATP pocket.

Belongs to the class-I aminoacyl-tRNA synthetase family. Monomer. The cofactor is Zn(2+).

It localises to the cytoplasm. The enzyme catalyses tRNA(Cys) + L-cysteine + ATP = L-cysteinyl-tRNA(Cys) + AMP + diphosphate. This Pseudarthrobacter chlorophenolicus (strain ATCC 700700 / DSM 12829 / CIP 107037 / JCM 12360 / KCTC 9906 / NCIMB 13794 / A6) (Arthrobacter chlorophenolicus) protein is Cysteine--tRNA ligase.